Consider the following 210-residue polypeptide: Interleukin-6 (210 aa).

Residues 1-25 (MNSLSTSAFSPVAFSLGLLLVMATA) form the signal peptide. Cysteine 72 and cysteine 78 are joined by a disulfide. Serine 81 is modified (phosphoserine). A disulfide bridge connects residues cysteine 101 and cysteine 111.

This sequence belongs to the IL-6 superfamily. Component of a hexamer of two molecules each of IL6, IL6R and IL6ST; first binds to IL6R to associate with the signaling subunit IL6ST. Interacts with IL6R (via the N-terminal ectodomain); this interaction may be affected by IL6R-binding with SORL1, hence decreasing IL6 cis signaling. Interacts with SORL1 (via the N-terminal ectodomain); this interaction leads to IL6 internalization and lysosomal degradation. May form a trimeric complex with the soluble SORL1 ectodomain and soluble IL6R receptor; this interaction might stabilize circulating IL6, hence promoting IL6 trans signaling.

Its subcellular location is the secreted. Cytokine with a wide variety of biological functions in immunity, tissue regeneration, and metabolism. Binds to IL6R, then the complex associates to the signaling subunit IL6ST/gp130 to trigger the intracellular IL6-signaling pathway. The interaction with the membrane-bound IL6R and IL6ST stimulates 'classic signaling', whereas the binding of IL6 and soluble IL6R to IL6ST stimulates 'trans-signaling'. Alternatively, 'cluster signaling' occurs when membrane-bound IL6:IL6R complexes on transmitter cells activate IL6ST receptors on neighboring receiver cells. In terms of biological role, IL6 is a potent inducer of the acute phase response. Rapid production of IL6 contributes to host defense during infection and tissue injury, but excessive IL6 synthesis is involved in disease pathology. In the innate immune response, is synthesized by myeloid cells, such as macrophages and dendritic cells, upon recognition of pathogens through toll-like receptors (TLRs) at the site of infection or tissue injury. In the adaptive immune response, is required for the differentiation of B cells into immunoglobulin-secreting cells. Plays a major role in the differentiation of CD4(+) T cell subsets. Essential factor for the development of T follicular helper (Tfh) cells that are required for the induction of germinal-center formation. Required to drive naive CD4(+) T cells to the Th17 lineage. Also required for proliferation of myeloma cells and the survival of plasmablast cells. Its function is as follows. Acts as an essential factor in bone homeostasis and on vessels directly or indirectly by induction of VEGF, resulting in increased angiogenesis activity and vascular permeability. Induces, through 'trans-signaling' and synergistically with IL1B and TNF, the production of VEGF. Involved in metabolic controls, is discharged into the bloodstream after muscle contraction increasing lipolysis and improving insulin resistance. 'Trans-signaling' in central nervous system also regulates energy and glucose homeostasis. Mediates, through GLP-1, crosstalk between insulin-sensitive tissues, intestinal L cells and pancreatic islets to adapt to changes in insulin demand. Also acts as a myokine. Plays a protective role during liver injury, being required for maintenance of tissue regeneration. Also has a pivotal role in iron metabolism by regulating HAMP/hepcidin expression upon inflammation or bacterial infection. Through activation of IL6ST-YAP-NOTCH pathway, induces inflammation-induced epithelial regeneration. This chain is Interleukin-6 (IL6), found in Mustela putorius furo (European domestic ferret).